A 176-amino-acid chain; its full sequence is NAD(P)H-quinone oxidoreductase subunit 6, chloroplastic (176 aa).

5 helical membrane passes run 10–30 (FLLV…VLFP), 32–52 (PIFS…LYIL), 61–81 (AQLL…VMFM), 95–115 (VGDG…ISTI), and 152–172 (FFLP…GAIS).

Belongs to the complex I subunit 6 family. In terms of assembly, NDH is composed of at least 16 different subunits, 5 of which are encoded in the nucleus.

The protein resides in the plastid. It is found in the chloroplast thylakoid membrane. It carries out the reaction a plastoquinone + NADH + (n+1) H(+)(in) = a plastoquinol + NAD(+) + n H(+)(out). The enzyme catalyses a plastoquinone + NADPH + (n+1) H(+)(in) = a plastoquinol + NADP(+) + n H(+)(out). NDH shuttles electrons from NAD(P)H:plastoquinone, via FMN and iron-sulfur (Fe-S) centers, to quinones in the photosynthetic chain and possibly in a chloroplast respiratory chain. The immediate electron acceptor for the enzyme in this species is believed to be plastoquinone. Couples the redox reaction to proton translocation, and thus conserves the redox energy in a proton gradient. The sequence is that of NAD(P)H-quinone oxidoreductase subunit 6, chloroplastic (ndhG) from Aethionema cordifolium (Lebanon stonecress).